The following is a 360-amino-acid chain: Protein Wnt-2 (360 aa).

The N-terminal stretch at 1–25 is a signal peptide; it reads MNAPLGGIWLWLPLLLTWLTPEVNS. 11 disulfide bridges follow: cysteine 76/cysteine 87, cysteine 127/cysteine 135, cysteine 137/cysteine 157, cysteine 206/cysteine 220, cysteine 208/cysteine 215, cysteine 278/cysteine 309, cysteine 294/cysteine 304, cysteine 308/cysteine 348, cysteine 324/cysteine 339, cysteine 326/cysteine 336, and cysteine 331/cysteine 332. Serine 212 carries O-palmitoleoyl serine; by PORCN lipidation. Asparagine 295 carries an N-linked (GlcNAc...) asparagine glycan.

The protein belongs to the Wnt family. In terms of processing, palmitoleoylation is required for efficient binding to frizzled receptors. Depalmitoleoylation leads to Wnt signaling pathway inhibition.

The protein resides in the secreted. The protein localises to the extracellular space. Its subcellular location is the extracellular matrix. Its function is as follows. Ligand for members of the frizzled family of seven transmembrane receptors. Functions in the canonical Wnt signaling pathway that results in activation of transcription factors of the TCF/LEF family. Functions as a upstream regulator of FGF10 expression. Plays an important role in embryonic lung development. May contribute to embryonic brain development by regulating the proliferation of dopaminergic precursors and neurons. The protein is Protein Wnt-2 (WNT2) of Gorilla gorilla gorilla (Western lowland gorilla).